The chain runs to 248 residues: tRNA (guanine-N(1)-)-methyltransferase (248 aa).

S-adenosyl-L-methionine-binding positions include glycine 113 and 133 to 138 (IGDYVL). The disordered stretch occupies residues 227-248 (RPAQTIRAKGESQKTPKNKTDG). The span at 234 to 248 (AKGESQKTPKNKTDG) shows a compositional bias: basic and acidic residues.

It belongs to the RNA methyltransferase TrmD family. In terms of assembly, homodimer.

The protein localises to the cytoplasm. It catalyses the reaction guanosine(37) in tRNA + S-adenosyl-L-methionine = N(1)-methylguanosine(37) in tRNA + S-adenosyl-L-homocysteine + H(+). Functionally, specifically methylates guanosine-37 in various tRNAs. This chain is tRNA (guanine-N(1)-)-methyltransferase, found in Rhodopseudomonas palustris (strain TIE-1).